Reading from the N-terminus, the 418-residue chain is MAEIKNYTLNFGPQHPAAHGVLRLVLELDGEVIQRADPHIGLLHRATEKLAEHKTFIQALPYMDRLDYVSMMCNEHAYVMAIEKLLGIEAPLRAQYIRVMFDEITRVLNHLMSLGSHALDVGAMAVFLYAFREREDLMDCYEAVSGARMHAAYYRPGGVYRDLPDTMPQYGDSSKYRGEKEVRAMNDARSGSLLDFIEDFTNRFPGCVDEYETLLTDNRIWKQRLVGIGVVDPDRAKALGFTGPMLRGSGVAWDLRKTQPYEVYDLMDFDVPVGVNGDCYDRYLVRVAEMRESNRIIRQCVEWLRNNPGPVMIENHKIAPPSRTAMKSNMEELIHHFKLFSEGFHVPPGEAYAAVEHPKGEFGIYLVADGANKPYRLKIRAPGFAHLQSLDEMARGHMIADAVTIIGTQDIVFGEIDR.

The protein belongs to the complex I 49 kDa subunit family. NDH-1 is composed of 14 different subunits. Subunits NuoB, C, D, E, F, and G constitute the peripheral sector of the complex.

Its subcellular location is the cell inner membrane. It catalyses the reaction a quinone + NADH + 5 H(+)(in) = a quinol + NAD(+) + 4 H(+)(out). Its function is as follows. NDH-1 shuttles electrons from NADH, via FMN and iron-sulfur (Fe-S) centers, to quinones in the respiratory chain. The immediate electron acceptor for the enzyme in this species is believed to be ubiquinone. Couples the redox reaction to proton translocation (for every two electrons transferred, four hydrogen ions are translocated across the cytoplasmic membrane), and thus conserves the redox energy in a proton gradient. In Bordetella bronchiseptica (strain ATCC BAA-588 / NCTC 13252 / RB50) (Alcaligenes bronchisepticus), this protein is NADH-quinone oxidoreductase subunit D.